The primary structure comprises 275 residues: NH(3)-dependent NAD(+) synthetase (275 aa).

46–53 contributes to the ATP binding site; it reads GISGGQDS. Aspartate 52 lines the Mg(2+) pocket. Arginine 140 serves as a coordination point for deamido-NAD(+). ATP is bound at residue threonine 160. Mg(2+) is bound at residue glutamate 165. Positions 173 and 180 each coordinate deamido-NAD(+). Positions 189 and 211 each coordinate ATP. Residue 260-261 coordinates deamido-NAD(+); the sequence is HK.

Belongs to the NAD synthetase family. Homodimer.

The catalysed reaction is deamido-NAD(+) + NH4(+) + ATP = AMP + diphosphate + NAD(+) + H(+). Its pathway is cofactor biosynthesis; NAD(+) biosynthesis; NAD(+) from deamido-NAD(+) (ammonia route): step 1/1. Catalyzes the ATP-dependent amidation of deamido-NAD to form NAD. Uses ammonia as a nitrogen source. The chain is NH(3)-dependent NAD(+) synthetase from Enterobacter sp. (strain 638).